Here is a 313-residue protein sequence, read N- to C-terminus: tRNA(Ile)-lysidine synthase (313 aa).

37-42 (SGGPDS) provides a ligand contact to ATP.

The protein belongs to the tRNA(Ile)-lysidine synthase family.

It localises to the cytoplasm. The catalysed reaction is cytidine(34) in tRNA(Ile2) + L-lysine + ATP = lysidine(34) in tRNA(Ile2) + AMP + diphosphate + H(+). Its function is as follows. Ligates lysine onto the cytidine present at position 34 of the AUA codon-specific tRNA(Ile) that contains the anticodon CAU, in an ATP-dependent manner. Cytidine is converted to lysidine, thus changing the amino acid specificity of the tRNA from methionine to isoleucine. The sequence is that of tRNA(Ile)-lysidine synthase from Corynebacterium efficiens (strain DSM 44549 / YS-314 / AJ 12310 / JCM 11189 / NBRC 100395).